The sequence spans 398 residues: GTP cyclohydrolase-2 (398 aa).

The segment at 1–172 (MNTPTHTHPH…TAAACASTTE (172 aa)) is unknown. Positions 173–398 (YELVTRTPVP…VKPIAKTGHA (226 aa)) are GTP cyclohydrolase II. 220 to 224 (RVHSS) serves as a coordination point for GTP. The Zn(2+) site is built by Cys-225, Cys-236, and Cys-238. Residues Gln-241, 263 to 265 (EGR), and Thr-285 contribute to the GTP site. Asp-297 functions as the Proton acceptor in the catalytic mechanism. Arg-299 functions as the Nucleophile in the catalytic mechanism. Positions 320 and 325 each coordinate GTP. Residues 375 to 398 (QRPQDPSETVDGETVKPIAKTGHA) form a disordered region.

The protein in the C-terminal section; belongs to the GTP cyclohydrolase II family. The cofactor is Zn(2+).

The catalysed reaction is GTP + 4 H2O = 2,5-diamino-6-hydroxy-4-(5-phosphoribosylamino)-pyrimidine + formate + 2 phosphate + 3 H(+). The protein operates within cofactor biosynthesis; riboflavin biosynthesis; 5-amino-6-(D-ribitylamino)uracil from GTP: step 1/4. Its function is as follows. Catalyzes the conversion of GTP to 2,5-diamino-6-ribosylamino-4(3H)-pyrimidinone 5'-phosphate (DARP), formate and pyrophosphate. The chain is GTP cyclohydrolase-2 (ribA) from Xylella fastidiosa (strain Temecula1 / ATCC 700964).